A 68-amino-acid polypeptide reads, in one-letter code: Large ribosomal subunit protein eL24 (68 aa).

Positions 7, 10, 33, and 37 each coordinate Zn(2+). The segment at 7 to 37 adopts a C4-type zinc-finger fold; it reads CSYCGREFEPGTGKMFVRNDGRVLFFCSSKC.

Belongs to the eukaryotic ribosomal protein eL24 family. In terms of assembly, part of the 50S ribosomal subunit. Forms a cluster with proteins L3 and L14. Requires Zn(2+) as cofactor.

Functionally, binds to the 23S rRNA. This is Large ribosomal subunit protein eL24 from Thermococcus gammatolerans (strain DSM 15229 / JCM 11827 / EJ3).